A 320-amino-acid polypeptide reads, in one-letter code: MARNKIALIGAGQIGGTLALLAGLKDLGDVVLFDIVDGVPQGKALDIAEAAPVEGFDARYAGASDYAAIKDADVVIVTAGVPRKPGMSRDDLIGINLKVMQAVGEGIKTHAPNAFVICITNPLDAMVWALQKFSGVPTNKIVGMAGVLDSARFRHFLAEEFKVSVEDVTAFVLGGHGDDMVPLTRYSTVAGVPLTDLVKLGWTTQEKLDAMVERTRKGGGEIVNLLKTGSAFYAPAASAIAMAESYLRDKKRVLPCAAYLDGQYGVKGMFIGVPIVIGANGVERVLEVTFDDAEKAMFDKSVASVTGLIEACKGVDSNLA.

Residues 10–15 (GAGQIG) and Asp34 each bind NAD(+). Positions 83 and 89 each coordinate substrate. Residues Asn96 and 119–121 (ITN) each bind NAD(+). Residues Asn121 and Arg152 each coordinate substrate. His176 acts as the Proton acceptor in catalysis.

The protein belongs to the LDH/MDH superfamily. MDH type 3 family.

It catalyses the reaction (S)-malate + NAD(+) = oxaloacetate + NADH + H(+). Catalyzes the reversible oxidation of malate to oxaloacetate. The polypeptide is Malate dehydrogenase (Methylobacterium radiotolerans (strain ATCC 27329 / DSM 1819 / JCM 2831 / NBRC 15690 / NCIMB 10815 / 0-1)).